The sequence spans 216 residues: Small ribosomal subunit protein uS3c (216 aa).

Residues 43-118 (IKNYLQKNMR…KLNIAITRIT (76 aa)) enclose the KH type-2 domain.

This sequence belongs to the universal ribosomal protein uS3 family. Part of the 30S ribosomal subunit.

Its subcellular location is the plastid. The protein localises to the chloroplast. The protein is Small ribosomal subunit protein uS3c (rps3) of Eucalyptus globulus subsp. globulus (Tasmanian blue gum).